Reading from the N-terminus, the 115-residue chain is Large ribosomal subunit protein bL19 (115 aa).

It belongs to the bacterial ribosomal protein bL19 family.

This protein is located at the 30S-50S ribosomal subunit interface and may play a role in the structure and function of the aminoacyl-tRNA binding site. The sequence is that of Large ribosomal subunit protein bL19 from Yersinia pseudotuberculosis serotype O:1b (strain IP 31758).